We begin with the raw amino-acid sequence, 853 residues long: Putative dipeptidyl aminopeptidase C14C4.15c (853 aa).

The segment at M1 to A26 is disordered. Topologically, residues M1 to R65 are cytoplasmic. The segment covering S15–S25 has biased composition (basic residues). A helical; Signal-anchor for type II membrane protein transmembrane segment spans residues Y66–F86. Over R87 to C853 the chain is Lumenal. N96, N102, N472, N483, and N613 each carry an N-linked (GlcNAc...) asparagine glycan. Catalysis depends on charge relay system residues S719, D795, and H828.

Belongs to the peptidase S9B family.

Its subcellular location is the vacuole membrane. The sequence is that of Putative dipeptidyl aminopeptidase C14C4.15c from Schizosaccharomyces pombe (strain 972 / ATCC 24843) (Fission yeast).